The primary structure comprises 201 residues: Large ribosomal subunit protein uL4 (201 aa).

A disordered region spans residues 45–67; the sequence is AQKTRAEVTGSGKKPWRQKGTGR.

It belongs to the universal ribosomal protein uL4 family. In terms of assembly, part of the 50S ribosomal subunit.

In terms of biological role, one of the primary rRNA binding proteins, this protein initially binds near the 5'-end of the 23S rRNA. It is important during the early stages of 50S assembly. It makes multiple contacts with different domains of the 23S rRNA in the assembled 50S subunit and ribosome. Forms part of the polypeptide exit tunnel. In Yersinia enterocolitica serotype O:8 / biotype 1B (strain NCTC 13174 / 8081), this protein is Large ribosomal subunit protein uL4.